Consider the following 396-residue polypeptide: Elongation factor Tu (396 aa).

Residues 10-206 enclose the tr-type G domain; it reads KPHCNIGTIG…EVDAYIPQPE (197 aa). Positions 19–26 are G1; that stretch reads GHVDHGKT. GTP is bound at residue 19 to 26; sequence GHVDHGKT. A Mg(2+)-binding site is contributed by Thr26. Residues 60–64 are G2; the sequence is GITIS. The G3 stretch occupies residues 81–84; sequence DCPG. Residues 81–85 and 136–139 each bind GTP; these read DCPGH and NKCD. Residues 136-139 are G4; that stretch reads NKCD. Residues 174–176 form a G5 region; sequence SAL.

The protein belongs to the TRAFAC class translation factor GTPase superfamily. Classic translation factor GTPase family. EF-Tu/EF-1A subfamily. In terms of assembly, monomer.

Its subcellular location is the cytoplasm. It carries out the reaction GTP + H2O = GDP + phosphate + H(+). GTP hydrolase that promotes the GTP-dependent binding of aminoacyl-tRNA to the A-site of ribosomes during protein biosynthesis. This chain is Elongation factor Tu, found in Paramagnetospirillum magneticum (strain ATCC 700264 / AMB-1) (Magnetospirillum magneticum).